A 301-amino-acid chain; its full sequence is ATP synthase gamma chain (301 aa).

Belongs to the ATPase gamma chain family. As to quaternary structure, F-type ATPases have 2 components, CF(1) - the catalytic core - and CF(0) - the membrane proton channel. CF(1) has five subunits: alpha(3), beta(3), gamma(1), delta(1), epsilon(1). CF(0) has three main subunits: a, b and c.

The protein resides in the cell inner membrane. Its function is as follows. Produces ATP from ADP in the presence of a proton gradient across the membrane. The gamma chain is believed to be important in regulating ATPase activity and the flow of protons through the CF(0) complex. The chain is ATP synthase gamma chain from Helicobacter pylori (strain G27).